The primary structure comprises 89 residues: Cell division topological specificity factor (89 aa).

It belongs to the MinE family.

Its function is as follows. Prevents the cell division inhibition by proteins MinC and MinD at internal division sites while permitting inhibition at polar sites. This ensures cell division at the proper site by restricting the formation of a division septum at the midpoint of the long axis of the cell. In Pectobacterium atrosepticum (strain SCRI 1043 / ATCC BAA-672) (Erwinia carotovora subsp. atroseptica), this protein is Cell division topological specificity factor.